The chain runs to 231 residues: Large ribosomal subunit protein uL1 (231 aa).

Belongs to the universal ribosomal protein uL1 family. Part of the 50S ribosomal subunit.

Functionally, binds directly to 23S rRNA. The L1 stalk is quite mobile in the ribosome, and is involved in E site tRNA release. Its function is as follows. Protein L1 is also a translational repressor protein, it controls the translation of the L11 operon by binding to its mRNA. This Chlorobaculum tepidum (strain ATCC 49652 / DSM 12025 / NBRC 103806 / TLS) (Chlorobium tepidum) protein is Large ribosomal subunit protein uL1.